A 596-amino-acid chain; its full sequence is Elongation factor 4 (596 aa).

The tr-type G domain maps to 2 to 184 (KNIRNFAIIA…SIVKYIPPPE (183 aa)). GTP is bound by residues 14–19 (DHGKST) and 131–134 (NKID).

This sequence belongs to the TRAFAC class translation factor GTPase superfamily. Classic translation factor GTPase family. LepA subfamily.

The protein localises to the cell inner membrane. It catalyses the reaction GTP + H2O = GDP + phosphate + H(+). Its function is as follows. Required for accurate and efficient protein synthesis under certain stress conditions. May act as a fidelity factor of the translation reaction, by catalyzing a one-codon backward translocation of tRNAs on improperly translocated ribosomes. Back-translocation proceeds from a post-translocation (POST) complex to a pre-translocation (PRE) complex, thus giving elongation factor G a second chance to translocate the tRNAs correctly. Binds to ribosomes in a GTP-dependent manner. The protein is Elongation factor 4 of Neorickettsia sennetsu (strain ATCC VR-367 / Miyayama) (Ehrlichia sennetsu).